The sequence spans 380 residues: Putative T-box protein 40 (380 aa).

Residues 11-192 (MAEEDRWLTQ…KNATFENRLD (182 aa)) constitute a DNA-binding region (T-box). Residues 188–215 (ENRLDGGNKRKNTNSREEPSSKRSKNET) form a disordered region. The segment covering 189-215 (NRLDGGNKRKNTNSREEPSSKRSKNET) has biased composition (basic and acidic residues).

It is found in the nucleus. The protein is Putative T-box protein 40 (tbx-40) of Caenorhabditis elegans.